Reading from the N-terminus, the 498-residue chain is Glycerol kinase (498 aa).

T13 is an ADP binding site. ATP is bound by residues T13, T14, and S15. T13 serves as a coordination point for sn-glycerol 3-phosphate. R17 is an ADP binding site. R83, E84, Y135, and D244 together coordinate sn-glycerol 3-phosphate. Residues R83, E84, Y135, D244, and Q245 each contribute to the glycerol site. 2 residues coordinate ADP: T266 and G309. Residues T266, G309, Q313, and G410 each contribute to the ATP site. ADP is bound by residues G410 and N414.

Belongs to the FGGY kinase family. As to quaternary structure, homotetramer and homodimer (in equilibrium).

The catalysed reaction is glycerol + ATP = sn-glycerol 3-phosphate + ADP + H(+). The protein operates within polyol metabolism; glycerol degradation via glycerol kinase pathway; sn-glycerol 3-phosphate from glycerol: step 1/1. Its activity is regulated as follows. Activated by phosphorylation and inhibited by fructose 1,6-bisphosphate (FBP). Functionally, key enzyme in the regulation of glycerol uptake and metabolism. Catalyzes the phosphorylation of glycerol to yield sn-glycerol 3-phosphate. The polypeptide is Glycerol kinase (Symbiobacterium thermophilum (strain DSM 24528 / JCM 14929 / IAM 14863 / T)).